Here is a 467-residue protein sequence, read N- to C-terminus: 3-isopropylmalate dehydratase large subunit (467 aa).

3 residues coordinate [4Fe-4S] cluster: Cys347, Cys407, and Cys410.

The protein belongs to the aconitase/IPM isomerase family. LeuC type 1 subfamily. Heterodimer of LeuC and LeuD. It depends on [4Fe-4S] cluster as a cofactor.

It catalyses the reaction (2R,3S)-3-isopropylmalate = (2S)-2-isopropylmalate. The protein operates within amino-acid biosynthesis; L-leucine biosynthesis; L-leucine from 3-methyl-2-oxobutanoate: step 2/4. Catalyzes the isomerization between 2-isopropylmalate and 3-isopropylmalate, via the formation of 2-isopropylmaleate. In Prochlorococcus marinus (strain MIT 9301), this protein is 3-isopropylmalate dehydratase large subunit.